Reading from the N-terminus, the 196-residue chain is MVIGAVLAGGISKRFGEDKLTYRVGGKPLILYTIEALESASKIEKIVVIASPFNWQKFRELGLEVIVDALMVGPLGGIYLALSLGDSFVVGGDMPLLVPEFIDYLVAKFEEAKKLACVPRWPNGYLEPLHAVYSRSLREIIEGYIERGEYKVGNVIESSNPCYIPVESLPERWKWAFFNINKKEDLRKLKTFIKEF.

GTP contacts are provided by residues 7–9 (LAG), Lys19, Asp68, and Asp93. Asp93 lines the Mg(2+) pocket.

Belongs to the MobA family. The cofactor is Mg(2+).

Its subcellular location is the cytoplasm. It carries out the reaction Mo-molybdopterin + GTP + H(+) = Mo-molybdopterin guanine dinucleotide + diphosphate. Functionally, transfers a GMP moiety from GTP to Mo-molybdopterin (Mo-MPT) cofactor (Moco or molybdenum cofactor) to form Mo-molybdopterin guanine dinucleotide (Mo-MGD) cofactor. This chain is Probable molybdenum cofactor guanylyltransferase, found in Pyrococcus furiosus (strain ATCC 43587 / DSM 3638 / JCM 8422 / Vc1).